The chain runs to 397 residues: Tryptophan synthase beta chain (397 aa).

Residue Lys87 is modified to N6-(pyridoxal phosphate)lysine.

The protein belongs to the TrpB family. In terms of assembly, tetramer of two alpha and two beta chains. Requires pyridoxal 5'-phosphate as cofactor.

It carries out the reaction (1S,2R)-1-C-(indol-3-yl)glycerol 3-phosphate + L-serine = D-glyceraldehyde 3-phosphate + L-tryptophan + H2O. It participates in amino-acid biosynthesis; L-tryptophan biosynthesis; L-tryptophan from chorismate: step 5/5. Its function is as follows. The beta subunit is responsible for the synthesis of L-tryptophan from indole and L-serine. The sequence is that of Tryptophan synthase beta chain from Escherichia coli O127:H6 (strain E2348/69 / EPEC).